Here is a 156-residue protein sequence, read N- to C-terminus: MADQRNQADKPTTRIPDDEWEAIVANVPLVSVDLVIRHEGGVLLGFRENEPARGEWFVPGGTVFKNETLTDALYRVADEELGVDVTIESRLGTFEHFYDTSDVEGIDSKHYLATAFEVTLDDDNLEMDTQHSQLKVFEPPYEGLHPYVERYLDALD.

Substrate-binding positions include 14-15 (RI) and arginine 47. The Nudix hydrolase domain maps to 25–156 (ANVPLVSVDL…YVERYLDALD (132 aa)). Glycine 60, glutamate 80, and glutamine 130 together coordinate Mg(2+). The short motif at 61 to 82 (GTVFKNETLTDALYRVADEELG) is the Nudix box element.

This sequence belongs to the Nudix hydrolase family. It depends on Mg(2+) as a cofactor.

It functions in the pathway protein modification; protein glycosylation. The protein operates within cell surface structure biogenesis; S-layer biogenesis. Functionally, nudix hydrolase involved in N-glycan biosynthetic pathway that takes place under low-salt conditions (1.75 M instead of 3.4 M). Participates in the formation of the tetrasaccharide present at 'Asn-532' of S-layer glycoprotein Csg, consisting of a sulfated hexose, 2 hexoses and rhamnose. Mediates attachment of sugar 3 in the tetrasaccharide. This chain is Low-salt glycan biosynthesis protein Agl8 (agl8), found in Haloferax volcanii (strain ATCC 29605 / DSM 3757 / JCM 8879 / NBRC 14742 / NCIMB 2012 / VKM B-1768 / DS2) (Halobacterium volcanii).